Here is a 321-residue protein sequence, read N- to C-terminus: Probable arabinan endo-1,5-alpha-L-arabinosidase A (321 aa).

Residues 1-19 form the signal peptide; it reads MSASAFVAVASCLAALVHG. The active-site Proton acceptor is Asp-34. Catalysis depends on Glu-200, which acts as the Proton donor.

It belongs to the glycosyl hydrolase 43 family.

It is found in the secreted. It carries out the reaction Endohydrolysis of (1-&gt;5)-alpha-arabinofuranosidic linkages in (1-&gt;5)-arabinans.. It functions in the pathway glycan metabolism; L-arabinan degradation. Its function is as follows. Endo-1,5-alpha-L-arabinanase involved in degradation of pectin. Its preferred substrate is linear 1,5-alpha-L-arabinan. This is Probable arabinan endo-1,5-alpha-L-arabinosidase A (abnA) from Neosartorya fischeri (strain ATCC 1020 / DSM 3700 / CBS 544.65 / FGSC A1164 / JCM 1740 / NRRL 181 / WB 181) (Aspergillus fischerianus).